A 322-amino-acid polypeptide reads, in one-letter code: Replication factor C small subunit (322 aa).

45 to 52 (GPPGVGKT) provides a ligand contact to ATP.

Belongs to the activator 1 small subunits family. RfcS subfamily. Heteromultimer composed of small subunits (RfcS) and large subunits (RfcL).

Functionally, part of the RFC clamp loader complex which loads the PCNA sliding clamp onto DNA. The polypeptide is Replication factor C small subunit (Methanocella arvoryzae (strain DSM 22066 / NBRC 105507 / MRE50)).